We begin with the raw amino-acid sequence, 359 residues long: NAC transcription factor 47 (359 aa).

The region spanning 10-186 is the NAC domain; that stretch reads LPPGFRFHPT…DWVLCRIYKK (177 aa). A DNA-binding region spans residues 112 to 192; sequence IGIKKALVFY…IYKKSHASLS (81 aa). Disordered regions lie at residues 147–166 and 200–226; these read KRIN…FGDR and TSNQ…LQND. A compositionally biased stretch (polar residues) spans 148-165; that stretch reads RINSSRSGGSEVNNNFGD.

The protein resides in the nucleus. Functionally, transcription factor that binds to the promoter of ACO5, an ACC oxidase involved in ethylene biosynthesis. Mediates waterlogging-induced hyponastic leaf movement, and cell expansion in abaxial cells of the basal petiole region, by directly regulating the expression of ACO5. Required for normal seed development and morphology. In Arabidopsis thaliana (Mouse-ear cress), this protein is NAC transcription factor 47.